The following is an 808-amino-acid chain: Probable inorganic carbon transporter subunit DabA (808 aa).

Cys-335, Asp-337, His-497, and Cys-512 together coordinate Zn(2+).

Belongs to the inorganic carbon transporter (TC 9.A.2) DabA family. Forms a complex with DabB. Requires Zn(2+) as cofactor.

The protein localises to the cell inner membrane. Functionally, part of an energy-coupled inorganic carbon pump. This Rhodopseudomonas palustris (strain TIE-1) protein is Probable inorganic carbon transporter subunit DabA.